The following is a 321-amino-acid chain: Acetylglutamate kinase (321 aa).

Substrate contacts are provided by residues 88-89 (GG), R110, and N216.

The protein belongs to the acetylglutamate kinase family. ArgB subfamily.

The protein localises to the cytoplasm. It carries out the reaction N-acetyl-L-glutamate + ATP = N-acetyl-L-glutamyl 5-phosphate + ADP. Its pathway is amino-acid biosynthesis; L-arginine biosynthesis; N(2)-acetyl-L-ornithine from L-glutamate: step 2/4. Its function is as follows. Catalyzes the ATP-dependent phosphorylation of N-acetyl-L-glutamate. The protein is Acetylglutamate kinase of Ehrlichia chaffeensis (strain ATCC CRL-10679 / Arkansas).